We begin with the raw amino-acid sequence, 347 residues long: MSGLLCYCRQGFEPELAAELSARAAFVGIAGYARTQRNDGYVLFVCDEAAQLAAKLQWRELIFARQKLVVIAELKGIDPKDRITPILAALEGQQRFGDLWVEHPDSDAGKPLAGLARSFGNALRPALRKAGLLTDKPQPRQPRLHICFLDGDHALLAVADSADSAPWPLGIPRLKLLPEAPSRSALKLDEALLTLLTPEEREALVKPGMRAADLGAAPGGWTWVLTRQHVHVTSVDNGPLRAHVLETGLVEHLRADGFHWKPAQPLDWMVCDMVEQPRRVAERMATWVREGWCRNTIFNLKLPMKKRWDETRLCLELFEQQAEKSLIVRAKQLYHDREEITVLAMRG.

Residues serine 184, 217-220, aspartate 236, aspartate 256, and aspartate 272 contribute to the S-adenosyl-L-methionine site; that span reads APGG. Lysine 301 (proton acceptor) is an active-site residue.

The protein belongs to the class I-like SAM-binding methyltransferase superfamily. RNA methyltransferase RlmE family. RlmM subfamily. As to quaternary structure, monomer.

The protein localises to the cytoplasm. It catalyses the reaction cytidine(2498) in 23S rRNA + S-adenosyl-L-methionine = 2'-O-methylcytidine(2498) in 23S rRNA + S-adenosyl-L-homocysteine + H(+). In terms of biological role, catalyzes the 2'-O-methylation at nucleotide C2498 in 23S rRNA. In Xanthomonas oryzae pv. oryzae (strain KACC10331 / KXO85), this protein is Ribosomal RNA large subunit methyltransferase M.